The following is a 493-amino-acid chain: Ketol-acid reductoisomerase (NADP(+)) (493 aa).

The KARI N-terminal Rossmann domain occupies 15–208 (AQLGKCRFMQ…GGDRAGVLES (194 aa)). NADP(+)-binding positions include 45–48 (CGAQ), Arg-68, Arg-76, Ser-78, and 108–110 (DKQ). His-132 is a catalytic residue. Gly-158 contributes to the NADP(+) binding site. 2 KARI C-terminal knotted domains span residues 209 to 344 (SFVA…NALA) and 345 to 486 (FAGK…MKDM). Positions 217, 221, 389, and 393 each coordinate Mg(2+). Residue Ser-414 participates in substrate binding.

This sequence belongs to the ketol-acid reductoisomerase family. Mg(2+) is required as a cofactor.

The catalysed reaction is (2R)-2,3-dihydroxy-3-methylbutanoate + NADP(+) = (2S)-2-acetolactate + NADPH + H(+). The enzyme catalyses (2R,3R)-2,3-dihydroxy-3-methylpentanoate + NADP(+) = (S)-2-ethyl-2-hydroxy-3-oxobutanoate + NADPH + H(+). Its pathway is amino-acid biosynthesis; L-isoleucine biosynthesis; L-isoleucine from 2-oxobutanoate: step 2/4. It functions in the pathway amino-acid biosynthesis; L-valine biosynthesis; L-valine from pyruvate: step 2/4. Functionally, involved in the biosynthesis of branched-chain amino acids (BCAA). Catalyzes an alkyl-migration followed by a ketol-acid reduction of (S)-2-acetolactate (S2AL) to yield (R)-2,3-dihydroxy-isovalerate. In the isomerase reaction, S2AL is rearranged via a Mg-dependent methyl migration to produce 3-hydroxy-3-methyl-2-ketobutyrate (HMKB). In the reductase reaction, this 2-ketoacid undergoes a metal-dependent reduction by NADPH to yield (R)-2,3-dihydroxy-isovalerate. The protein is Ketol-acid reductoisomerase (NADP(+)) of Aeromonas salmonicida (strain A449).